The sequence spans 546 residues: Chaperonin GroEL 6 (546 aa).

ATP-binding positions include T30 to P33, K51, D87 to T91, G415, and D496.

Belongs to the chaperonin (HSP60) family. In terms of assembly, forms a cylinder of 14 subunits composed of two heptameric rings stacked back-to-back. Interacts with the co-chaperonin GroES.

The protein resides in the cytoplasm. It carries out the reaction ATP + H2O + a folded polypeptide = ADP + phosphate + an unfolded polypeptide.. Together with its co-chaperonin GroES, plays an essential role in assisting protein folding. The GroEL-GroES system forms a nano-cage that allows encapsulation of the non-native substrate proteins and provides a physical environment optimized to promote and accelerate protein folding. This Bradyrhizobium diazoefficiens (strain JCM 10833 / BCRC 13528 / IAM 13628 / NBRC 14792 / USDA 110) protein is Chaperonin GroEL 6.